The following is a 115-amino-acid chain: MNSGVSLCVLMAVLAAGALTQPVPPAEPAGSGLQRAEEAPRRQLRAVQRTDGESRAHLGALLARYIQQARKAPSGRMSIIKNLQNLDPSHRISDRDYMGWMDFGRRSAEEYEYPS.

Positions 1–20 (MNSGVSLCVLMAVLAAGALT) are cleaved as a signal peptide. The propeptide occupies 21–44 (QPVPPAEPAGSGLQRAEEAPRRQL). The tract at residues 21 to 51 (QPVPPAEPAGSGLQRAEEAPRRQLRAVQRTD) is disordered. The O-linked (Xyl...) (chondroitin sulfate) serine glycan is linked to S31. The residue at position 97 (Y97) is a Sulfotyrosine. F103 is subject to Phenylalanine amide. Positions 107-115 (SAEEYEYPS) are excised as a propeptide. 2 positions are modified to sulfotyrosine: Y111 and Y113.

It belongs to the gastrin/cholecystokinin family. Binds to CCK-A receptors in the pancreas and CCK-B receptors in the brain. In terms of processing, the precursor is cleaved by proteases to produce a number of active cholecystokinins. The precursor is cleaved by ACE, which removes the Gly-Arg-Arg peptide at the C-terminus, leading to mature hormone.

It is found in the secreted. In terms of biological role, this peptide hormone induces gall bladder contraction and the release of pancreatic enzymes in the gut. Its function in the brain is not clear. Binding to CCK-A receptors stimulates amylase release from the pancreas, binding to CCK-B receptors stimulates gastric acid secretion. In Macaca fascicularis (Crab-eating macaque), this protein is Cholecystokinin (CCK).